Consider the following 504-residue polypeptide: Lysine--tRNA ligase (504 aa).

Mg(2+)-binding residues include E404 and E411.

It belongs to the class-II aminoacyl-tRNA synthetase family. In terms of assembly, homodimer. Requires Mg(2+) as cofactor.

The protein resides in the cytoplasm. It carries out the reaction tRNA(Lys) + L-lysine + ATP = L-lysyl-tRNA(Lys) + AMP + diphosphate. In Aliarcobacter butzleri (strain RM4018) (Arcobacter butzleri), this protein is Lysine--tRNA ligase.